Reading from the N-terminus, the 494-residue chain is Histidine--tRNA ligase (494 aa).

The tract at residues 1–20 is disordered; it reads MAKDQKKQPRPKAETPKGFR.

This sequence belongs to the class-II aminoacyl-tRNA synthetase family. As to quaternary structure, homodimer.

It localises to the cytoplasm. The catalysed reaction is tRNA(His) + L-histidine + ATP = L-histidyl-tRNA(His) + AMP + diphosphate + H(+). The chain is Histidine--tRNA ligase from Paracoccus denitrificans (strain Pd 1222).